Consider the following 368-residue polypeptide: MRADTRDFRALFLGDAPLLDTRAPVEFAKGAFPGAVNLPLMSDAERHKVGLCYKQQGQDAAIALGHRLVSGAVKAERVAAWAAFAQAHPEGYLYCFRGGLRSQISQAWLREEAGIAYPRVIGGYKAMRGFLLETIEQAIAECGFVVLGGMTGTGKTDVLRQLDHGLDLEAHAHHRGSSFGKHATGQPAQIDFDNRLAIDILKKRAAGCRQFVVEDESQAIGSCSLPFGLYQGMQRYPVVWLEDTQPARVQRILRDYVIDLCGEFTALHGEQDGFGLYAARLRQSLDNIARRLGGERHRRLAALMDEALARQAGDGSVDAHRAWIEPLLTEYYDPMYAYQRQAKAARIVFTGDHQEVLDYLRGPGRALP.

Positions 12-136 (FLGDAPLLDT…MRGFLLETIE (125 aa)) constitute a Rhodanese domain. Cys95 (S-selanylcysteine intermediate) is an active-site residue.

Belongs to the SelU family. In terms of assembly, monomer.

It catalyses the reaction 5-methylaminomethyl-2-thiouridine(34) in tRNA + selenophosphate + (2E)-geranyl diphosphate + H2O + H(+) = 5-methylaminomethyl-2-selenouridine(34) in tRNA + (2E)-thiogeraniol + phosphate + diphosphate. The catalysed reaction is 5-methylaminomethyl-2-thiouridine(34) in tRNA + (2E)-geranyl diphosphate = 5-methylaminomethyl-S-(2E)-geranyl-thiouridine(34) in tRNA + diphosphate. The enzyme catalyses 5-methylaminomethyl-S-(2E)-geranyl-thiouridine(34) in tRNA + selenophosphate + H(+) = 5-methylaminomethyl-2-(Se-phospho)selenouridine(34) in tRNA + (2E)-thiogeraniol. It carries out the reaction 5-methylaminomethyl-2-(Se-phospho)selenouridine(34) in tRNA + H2O = 5-methylaminomethyl-2-selenouridine(34) in tRNA + phosphate. Its function is as follows. Involved in the post-transcriptional modification of the uridine at the wobble position (U34) of tRNA(Lys), tRNA(Glu) and tRNA(Gln). Catalyzes the conversion of 2-thiouridine (S2U-RNA) to 2-selenouridine (Se2U-RNA). Acts in a two-step process involving geranylation of 2-thiouridine (S2U) to S-geranyl-2-thiouridine (geS2U) and subsequent selenation of the latter derivative to 2-selenouridine (Se2U) in the tRNA chain. This Bordetella bronchiseptica (strain ATCC BAA-588 / NCTC 13252 / RB50) (Alcaligenes bronchisepticus) protein is tRNA 2-selenouridine synthase.